Consider the following 373-residue polypeptide: Enoyl-[acyl-carrier-protein] reductase, mitochondrial (373 aa).

The transit peptide at 1-53 (MWVCSTLWRVRTPARQWRGLLPASGCHGPAASSYSASAEPARVRALVYGHHGD) directs the protein to the mitochondrion. Lys-61 is modified (N6-acetyllysine; alternate). At Lys-61 the chain carries N6-succinyllysine; alternate. Residue Tyr-94 is the Proton donor of the active site. Residues Asn-167, 193-196 (NSGV), and 216-218 (RDR) contribute to the NADP(+) site. N6-acetyllysine; alternate occurs at positions 252 and 267. An N6-succinyllysine; alternate mark is found at Lys-252 and Lys-267. NADP(+) is bound by residues 285-288 (YGGM) and 310-312 (FWL). An N6-succinyllysine modification is found at Lys-316. Position 368 (Lys-368) interacts with NADP(+).

Belongs to the zinc-containing alcohol dehydrogenase family. Quinone oxidoreductase subfamily. In terms of assembly, homodimer. Isoform 2 interacts with PPARA in the nucleus and increases its activity. As to expression, highly expressed in skeletal and heart muscle. Expressed at lower level in placenta, liver, kidney and pancreas. Weakly or not expressed in lung.

It is found in the mitochondrion. It localises to the cytoplasm. The protein resides in the nucleus. It carries out the reaction a 2,3-saturated acyl-[ACP] + NADP(+) = a (2E)-enoyl-[ACP] + NADPH + H(+). It catalyses the reaction (2E)-butenoyl-[ACP] + NADPH + H(+) = butanoyl-[ACP] + NADP(+). The enzyme catalyses (2E)-hexenoyl-[ACP] + NADPH + H(+) = hexanoyl-[ACP] + NADP(+). The catalysed reaction is (2E)-octenoyl-[ACP] + NADPH + H(+) = octanoyl-[ACP] + NADP(+). It carries out the reaction (2E)-decenoyl-[ACP] + NADPH + H(+) = decanoyl-[ACP] + NADP(+). It catalyses the reaction (2E)-dodecenoyl-[ACP] + NADPH + H(+) = dodecanoyl-[ACP] + NADP(+). The enzyme catalyses (2E)-tetradecenoyl-[ACP] + NADPH + H(+) = tetradecanoyl-[ACP] + NADP(+). The catalysed reaction is (2E)-hexadecenoyl-[ACP] + NADPH + H(+) = hexadecanoyl-[ACP] + NADP(+). Functionally, catalyzes the NADPH-dependent reduction of trans-2-enoyl thioesters in mitochondrial fatty acid synthesis (fatty acid synthesis type II). Fatty acid chain elongation in mitochondria uses acyl carrier protein (ACP) as an acyl group carrier, but the enzyme accepts both ACP and CoA thioesters as substrates in vitro. Displays a preference for medium-chain over short- and long-chain substrates. May provide the octanoyl chain used for lipoic acid biosynthesis, regulating protein lipoylation and mitochondrial respiratory activity particularly in Purkinje cells. Involved in iron homeostasis; affecting Fe-S cluster assembly and ceramide metabolism. Required for proper morphology and bioenergetic functions of mitochondria. Required for maintenance of neurons. The polypeptide is Enoyl-[acyl-carrier-protein] reductase, mitochondrial (MECR) (Homo sapiens (Human)).